The following is a 481-amino-acid chain: Trigger factor (481 aa).

The region spanning 161–298 is the PPIase FKBP-type domain; that stretch reads GDQLTATVQT…VSEIQNRQLP (138 aa). Residues 173-245 are disordered; sequence DGVPLHKLDE…PTTLIMEERR (73 aa). Acidic residues predominate over residues 182 to 235; the sequence is EEDDDDDDDDDDDDDDDDDDDDDDDDDDDDDDDDDDDDDDDDDDDDDDDDDEGE.

Belongs to the FKBP-type PPIase family. Tig subfamily.

The protein localises to the cytoplasm. The enzyme catalyses [protein]-peptidylproline (omega=180) = [protein]-peptidylproline (omega=0). Its function is as follows. Involved in protein export. Acts as a chaperone by maintaining the newly synthesized protein in an open conformation. Functions as a peptidyl-prolyl cis-trans isomerase. This Herpetosiphon aurantiacus (strain ATCC 23779 / DSM 785 / 114-95) protein is Trigger factor.